We begin with the raw amino-acid sequence, 591 residues long: Parathyroid hormone/parathyroid hormone-related peptide receptor (591 aa).

Residues 1–26 (MGAARIAPSLALLLCCPVLSSAYALV) form the signal peptide. The Extracellular portion of the chain corresponds to 27–188 (DADDVFTKEE…REREVFDRLG (162 aa)). 3 disulfide bridges follow: Cys-48–Cys-117, Cys-108–Cys-148, and Cys-131–Cys-170. The interval 67 to 104 (KGWTPASTSGKPRKEKASGKFYPESKENKDVPTGSRRR) is disordered. Residues 81-96 (EKASGKFYPESKENKD) show a composition bias toward basic and acidic residues. Residues Asn-151, Asn-161, Asn-166, and Asn-176 are each glycosylated (N-linked (GlcNAc...) asparagine). Residues 189 to 212 (MIYTVGYSMSLASLTVAVLILAYF) traverse the membrane as a helical segment. At 213-219 (RRLHCTR) the chain is on the cytoplasmic side. Residues 220 to 239 (NYIHMHMFLSFMLRAASIFV) form a helical membrane-spanning segment. Over 240–282 (KDAVLYSGFTLDEAERLTEEELHIIAQVPPPPAAAAVGYAGCR) the chain is Extracellular. A helical transmembrane segment spans residues 283 to 306 (VAVTFFLYFLATNYYWILVEGLYL). At 307–320 (HSLIFMAFFSEKKY) the chain is on the cytoplasmic side. The chain crosses the membrane as a helical span at residues 321-342 (LWGFTIFGWGLPAVFVAVWVGV). Over 343 to 361 (RATLANTGCWDLSSGHKKW) the chain is Extracellular. Residues 362-382 (IIQVPILASVVLNFILFINII) traverse the membrane as a helical segment. Residues 383–409 (RVLATKLRETNAGRCDTRQQYRKLLRS) are Cytoplasmic-facing. A helical transmembrane segment spans residues 410–428 (TLVLVPLFGVHYTVFMALP). Residues 429 to 440 (YTEVSGTLWQIQ) lie on the Extracellular side of the membrane. Residues 441–463 (MHYEMLFNSFQGFFVAIIYCFCN) traverse the membrane as a helical segment. Residues 464–591 (GEVQAEIRKS…LLQEEWETVM (128 aa)) are Cytoplasmic-facing. Residues 474-477 (WSRW) carry the Important for interaction with G proteins motif. The tract at residues 516–544 (LPLSPRLPPATTNGHSQLPGHAKPGAPAT) is disordered.

This sequence belongs to the G-protein coupled receptor 2 family. In terms of assembly, homodimer in the absence of bound ligand. Peptide hormone binding leads to dissociation of the homodimer. Post-translationally, N-glycosylated.

Its subcellular location is the cell membrane. G-protein-coupled receptor for parathyroid hormone (PTH) and for parathyroid hormone-related peptide (PTHLH). Ligand binding causes a conformation change that triggers signaling via guanine nucleotide-binding proteins (G proteins) and modulates the activity of downstream effectors, such as adenylate cyclase (cAMP). PTH1R is coupled to G(s) G alpha proteins and mediates activation of adenylate cyclase activity. PTHLH dissociates from PTH1R more rapidly than PTH; as consequence, the cAMP response induced by PTHLH decays faster than the response induced by PTH. This Rattus norvegicus (Rat) protein is Parathyroid hormone/parathyroid hormone-related peptide receptor (Pth1r).